The sequence spans 141 residues: Large ribosomal subunit protein uL16 (141 aa).

A disordered region spans residues 1-23 (MLMPKRTKYRKQMKGRNRGKAHR).

It belongs to the universal ribosomal protein uL16 family. As to quaternary structure, part of the 50S ribosomal subunit.

Its function is as follows. Binds 23S rRNA and is also seen to make contacts with the A and possibly P site tRNAs. This is Large ribosomal subunit protein uL16 from Helicobacter pylori (strain J99 / ATCC 700824) (Campylobacter pylori J99).